The primary structure comprises 465 residues: Light-independent protochlorophyllide reductase subunit N (465 aa).

3 residues coordinate [4Fe-4S] cluster: Cys-22, Cys-47, and Cys-107.

This sequence belongs to the BchN/ChlN family. In terms of assembly, protochlorophyllide reductase is composed of three subunits; ChlL, ChlN and ChlB. Forms a heterotetramer of two ChlB and two ChlN subunits. The cofactor is [4Fe-4S] cluster.

The protein localises to the plastid. Its subcellular location is the chloroplast. The enzyme catalyses chlorophyllide a + oxidized 2[4Fe-4S]-[ferredoxin] + 2 ADP + 2 phosphate = protochlorophyllide a + reduced 2[4Fe-4S]-[ferredoxin] + 2 ATP + 2 H2O. It participates in porphyrin-containing compound metabolism; chlorophyll biosynthesis (light-independent). Its function is as follows. Component of the dark-operative protochlorophyllide reductase (DPOR) that uses Mg-ATP and reduced ferredoxin to reduce ring D of protochlorophyllide (Pchlide) to form chlorophyllide a (Chlide). This reaction is light-independent. The NB-protein (ChlN-ChlB) is the catalytic component of the complex. This is Light-independent protochlorophyllide reductase subunit N from Marchantia polymorpha (Common liverwort).